Consider the following 955-residue polypeptide: Leucine--tRNA ligase (955 aa).

The 'HIGH' region motif lies at 51 to 61 (PYLNGVLHAGH). Positions 647 to 651 (KLSKS) match the 'KMSKS' region motif. Lys650 is an ATP binding site.

It belongs to the class-I aminoacyl-tRNA synthetase family.

The protein resides in the cytoplasm. The catalysed reaction is tRNA(Leu) + L-leucine + ATP = L-leucyl-tRNA(Leu) + AMP + diphosphate. In Methanococcus maripaludis (strain C5 / ATCC BAA-1333), this protein is Leucine--tRNA ligase.